A 312-amino-acid polypeptide reads, in one-letter code: Dihydroorotate dehydrogenase B (NAD(+)), catalytic subunit (312 aa).

Residues serine 23 and 47-48 each bind FMN; that span reads KA. Residues lysine 47 and 71-75 contribute to the substrate site; that span reads NAIGL. FMN-binding residues include asparagine 102 and asparagine 130. Asparagine 130 serves as a coordination point for substrate. Cysteine 133 functions as the Nucleophile in the catalytic mechanism. FMN contacts are provided by lysine 168 and isoleucine 194. 195–196 serves as a coordination point for substrate; the sequence is NT. Residues glycine 220, 246-247, and 268-269 contribute to the FMN site; these read GG and GT.

The protein belongs to the dihydroorotate dehydrogenase family. Type 1 subfamily. In terms of assembly, heterotetramer of 2 PyrK and 2 PyrD type B subunits. The cofactor is FMN.

The protein localises to the cytoplasm. It carries out the reaction (S)-dihydroorotate + NAD(+) = orotate + NADH + H(+). Its pathway is pyrimidine metabolism; UMP biosynthesis via de novo pathway; orotate from (S)-dihydroorotate (NAD(+) route): step 1/1. Its function is as follows. Catalyzes the conversion of dihydroorotate to orotate with NAD(+) as electron acceptor. This Enterococcus faecalis (strain ATCC 47077 / OG1RF) protein is Dihydroorotate dehydrogenase B (NAD(+)), catalytic subunit (pyrDB).